The sequence spans 445 residues: Homogentisate 1,2-dioxygenase (445 aa).

N6-acetyllysine is present on lysine 98. Residues histidine 335, glutamate 341, and histidine 371 each coordinate Fe cation. Lysine 414 carries the post-translational modification N6-succinyllysine.

Belongs to the homogentisate dioxygenase family. As to quaternary structure, homohexamer arranged as a dimer of trimers. It depends on Fe cation as a cofactor.

The enzyme catalyses homogentisate + O2 = 4-maleylacetoacetate + H(+). It participates in amino-acid degradation; L-phenylalanine degradation; acetoacetate and fumarate from L-phenylalanine: step 4/6. Functionally, catalyzes the conversion of homogentisate to maleylacetoacetate. In Mus musculus (Mouse), this protein is Homogentisate 1,2-dioxygenase (Hgd).